A 911-amino-acid polypeptide reads, in one-letter code: Valine--tRNA ligase (911 aa).

A 'HIGH' region motif is present at residues 53-63 (PNVTGTLHLGH). The short motif at 533–537 (KMSKS) is the 'KMSKS' region element. Position 536 (Lys-536) interacts with ATP. A coiled-coil region spans residues 845–910 (KEIERLTKEL…NRLAMLRSMQ (66 aa)).

This sequence belongs to the class-I aminoacyl-tRNA synthetase family. ValS type 1 subfamily. In terms of assembly, monomer.

It localises to the cytoplasm. It catalyses the reaction tRNA(Val) + L-valine + ATP = L-valyl-tRNA(Val) + AMP + diphosphate. Its function is as follows. Catalyzes the attachment of valine to tRNA(Val). As ValRS can inadvertently accommodate and process structurally similar amino acids such as threonine, to avoid such errors, it has a 'posttransfer' editing activity that hydrolyzes mischarged Thr-tRNA(Val) in a tRNA-dependent manner. The polypeptide is Valine--tRNA ligase (Symbiobacterium thermophilum (strain DSM 24528 / JCM 14929 / IAM 14863 / T)).